The sequence spans 343 residues: Phosphatidylglycerol--prolipoprotein diacylglyceryl transferase 1 (343 aa).

Helical transmembrane passes span 19-39 (VPLR…VWLG), 54-74 (ADIA…YHVI), 93-113 (IWEG…GAWI), and 119-139 (GVPM…AQAI). An a 1,2-diacyl-sn-glycero-3-phospho-(1'-sn-glycerol)-binding site is contributed by R141. A run of 3 helical transmembrane segments spans residues 176–196 (HPTF…VIWA), 202–224 (LGHG…WIEY), and 238–258 (LNNW…VLSA). Residues 269–343 (EPGAETAAGD…TNGADSAKKG (75 aa)) are disordered. A compositionally biased stretch (basic and acidic residues) spans 283-293 (ADKDVKGTKDA). Residues 314-324 (APEDTSGADEA) are compositionally biased toward acidic residues.

The protein belongs to the Lgt family.

The protein resides in the cell membrane. The catalysed reaction is L-cysteinyl-[prolipoprotein] + a 1,2-diacyl-sn-glycero-3-phospho-(1'-sn-glycerol) = an S-1,2-diacyl-sn-glyceryl-L-cysteinyl-[prolipoprotein] + sn-glycerol 1-phosphate + H(+). It functions in the pathway protein modification; lipoprotein biosynthesis (diacylglyceryl transfer). Functionally, catalyzes the transfer of the diacylglyceryl group from phosphatidylglycerol to the sulfhydryl group of the N-terminal cysteine of a prolipoprotein, the first step in the formation of mature lipoproteins. This chain is Phosphatidylglycerol--prolipoprotein diacylglyceryl transferase 1, found in Streptomyces coelicolor (strain ATCC BAA-471 / A3(2) / M145).